The following is an 807-amino-acid chain: Putative transmembrane protein ORF807 (807 aa).

The next 5 helical transmembrane spans lie at 210–230 (VLML…SDIL), 234–254 (GLST…IVYF), 270–290 (VTIQ…FVIL), 459–479 (ILIG…LVLT), and 657–677 (VALL…MPLV).

It is found in the host membrane. The protein is Putative transmembrane protein ORF807 of Acidianus filamentous virus 1 (isolate United States/Yellowstone) (AFV-1).